We begin with the raw amino-acid sequence, 75 residues long: Conotoxin Vc6.15 (75 aa).

Positions 1-19 (MEKLTILLHVAAVLMSTQA) are cleaved as a signal peptide. Residues 20-41 (LIQEQRQKAKINLFSKRKPSAE) constitute a propeptide that is removed on maturation. Intrachain disulfides connect C49–C62, C55–C66, and C61–C71.

Belongs to the conotoxin O2 superfamily. Expressed by the venom duct.

Its subcellular location is the secreted. Inhibits voltage-gated ion channels. The chain is Conotoxin Vc6.15 from Conus victoriae (Queen Victoria cone).